An 86-amino-acid chain; its full sequence is MNYLTMISLALLVMTGVESGVRDAYIADNKNCIFTCYRDSYCKTECIKNGAETGYCIWIGEYGNACWCIKLPNKVPIKVPGKCNGR.

The N-terminal stretch at 1 to 19 (MNYLTMISLALLVMTGVES) is a signal peptide. Residues 22–84 (RDAYIADNKN…VPIKVPGKCN (63 aa)) enclose the LCN-type CS-alpha/beta domain. Disulfide bonds link Cys-32-Cys-83, Cys-36-Cys-56, Cys-42-Cys-66, and Cys-46-Cys-68. Asn-84 carries the asparagine amide modification.

It belongs to the long (4 C-C) scorpion toxin superfamily. Sodium channel inhibitor family. Alpha subfamily. As to expression, expressed by the venom gland.

Its subcellular location is the secreted. In terms of biological role, binds voltage-dependently at site-3 of sodium channels (Nav) and inhibits the inactivation of the activated channels, thereby blocking neuronal transmission. This chain is Neurotoxin 8-related gene product 1/2/3 (NTVIIIrgp1), found in Androctonus mauritanicus mauritanicus (Scorpion).